A 194-amino-acid polypeptide reads, in one-letter code: Small ribosomal subunit protein uS7 (194 aa).

The protein belongs to the universal ribosomal protein uS7 family. Part of the 30S ribosomal subunit.

One of the primary rRNA binding proteins, it binds directly to 16S rRNA where it nucleates assembly of the head domain of the 30S subunit. Is located at the subunit interface close to the decoding center. The protein is Small ribosomal subunit protein uS7 of Sulfurisphaera tokodaii (strain DSM 16993 / JCM 10545 / NBRC 100140 / 7) (Sulfolobus tokodaii).